Consider the following 497-residue polypeptide: MTKHIIVIGGGLGGISAAIRMAQSGYSVSLYEQNNHIGGKVNRHESDDFGFDLGPSILTMPYIFEKLFEYSKKQMSDYVTIKRLPHQWRSFFPDGTTIDLYEGIKETGQHNAILSKQDIEELQNYLNYTRRIDRITEKGYFNYGLDTLSQIIKFHGPLNALINYDYVHTMQQAIDKRISNPYLRQMLGYFIKYVGSSSYDAPAVLSMLFHMQQEQGLWYVEGGIHHLANALEKLAREEGVTIHTGTRVDNIKTYERCVTGVRLDTGEFVKADYIISNMEVIPTYKYLLHLDTQRLNKLEREFEPASSGYVMHLGVACQYPQLAHHNFFFTENAYLNYQQVFHEKVLPDDPTIYLVNTNKTDHTQAPVGYENIKVLPHIPYIQDQPFTTEDYAKFRDKILDKLEKMGLTDLRKHIIYEDVWTPEDIEKNYRSNRGAIYGVVADKKKNKGFKFPKESQYFENLYFVGGSVNPGGGMPMVTLSGQQVADKINAREAKNRK.

Val-7–Ile-19 serves as a coordination point for FAD.

It belongs to the carotenoid/retinoid oxidoreductase family. CrtP subfamily. FAD is required as a cofactor.

The enzyme catalyses all-trans-4,4'-diaponeurosporene + 2 AH2 + 2 O2 = 4,4'-diaponeurosporenal + 2 A + 3 H2O. Its pathway is carotenoid biosynthesis; staphyloxanthin biosynthesis; staphyloxanthin from farnesyl diphosphate: step 3/5. Involved in the biosynthesis of the yellow-orange carotenoid staphyloxanthin, which plays a role in the virulence via its protective function against oxidative stress. Catalyzes the oxidation of the terminal methyl side group of 4,4'-diaponeurosporene to form 4,4'-diaponeurosporen-4-al. The protein is 4,4'-diaponeurosporene oxygenase of Staphylococcus aureus (strain MRSA252).